The following is a 372-amino-acid chain: Lysophosphatidic acid receptor 5 (372 aa).

Residues 1 to 30 (MFANSSANTTSTNSSVLQCPDYRDTHRLHM) lie on the Extracellular side of the membrane. N-linked (GlcNAc...) asparagine glycosylation is found at N4, N8, and N13. The chain crosses the membrane as a helical span at residues 31 to 51 (VVYSLVLATGLPLNALALWVF). Residues 52 to 59 (LRVLRVHS) are Cytoplasmic-facing. A helical membrane pass occupies residues 60–80 (VVSVYMCNLAASDLLFTLSLP). Over 81–100 (LRLSYYAQHHWPFPGFLCQT) the chain is Extracellular. An intrachain disulfide couples C98 to C179. A helical transmembrane segment spans residues 101-121 (SGAIFQMNMYGSCLFLMLINV). At 122–140 (DRYAAIVHPLRLRHLRRPR) the chain is on the cytoplasmic side. A helical membrane pass occupies residues 141–161 (VARRLCLGVWALILLFAVPAA). Residues 162–191 (RVHSPSHCTYKNITVRLCFESFSDELWKGR) lie on the Extracellular side of the membrane. Residue N173 is glycosylated (N-linked (GlcNAc...) asparagine). The helical transmembrane segment at 192–212 (LLPLLLLAEILGFLLPLAAVV) threads the bilayer. At 213-243 (YSSGRVFWTLARPDATQSQRRRKTVRLLLAN) the chain is on the cytoplasmic side. The helical transmembrane segment at 244–264 (LIIFLLCFVPYNSTLAVYGLL) threads the bilayer. At 265 to 280 (RANLVKNSIQDRDQVR) the chain is on the extracellular side. A helical membrane pass occupies residues 281-301 (GVLMIMVLLAGANCVLDPLVY). The Cytoplasmic segment spans residues 302 to 372 (YFSAEGFRNT…PDNCSQDSAL (71 aa)).

This sequence belongs to the G-protein coupled receptor 1 family.

Its subcellular location is the cell membrane. Functionally, receptor for lysophosphatidic acid (LPA), a mediator of diverse cellular activities. This is Lysophosphatidic acid receptor 5 (Lpar5) from Mus musculus (Mouse).